The chain runs to 155 residues: Alanine- and arginine-rich domain-containing protein (155 aa).

The sequence is that of Alanine- and arginine-rich domain-containing protein (AARD) from Homo sapiens (Human).